Here is a 320-residue protein sequence, read N- to C-terminus: Malate dehydrogenase (320 aa).

NAD(+) is bound by residues 10–15 and Asp34; that span reads GSGMIG. The substrate site is built by Arg83 and Arg89. NAD(+) is bound by residues Asn96 and 119–121; that span reads ITN. Residues Asn121 and Arg152 each contribute to the substrate site. His176 acts as the Proton acceptor in catalysis.

The protein belongs to the LDH/MDH superfamily. MDH type 3 family.

The enzyme catalyses (S)-malate + NAD(+) = oxaloacetate + NADH + H(+). Catalyzes the reversible oxidation of malate to oxaloacetate. The protein is Malate dehydrogenase of Hyphomonas neptunium (strain ATCC 15444).